Consider the following 181-residue polypeptide: MASSMLSSAAVVTSQLQATMVAPFTGLKSSAAFPVTRKTNTDITSIASNGGRVSCMKVWPPIGKKKFETLSYLPDLSDVELAKEVDYLLRNKWIPCVEFELEHGFVYREHGSTPGYYDGRYWTMWKLPLFGCTDSAQVLKEVQECKKEYPNALIRIIGFDNNRQVQCISFIAYKPPSFTDA.

A chloroplast-targeting transit peptide spans 1 to 54; it reads MASSMLSSAAVVTSQLQATMVAPFTGLKSSAAFPVTRKTNTDITSIASNGGRVS.

The protein belongs to the RuBisCO small chain family. In terms of assembly, heterohexadecamer of 8 large and 8 small subunits.

It is found in the plastid. The protein localises to the chloroplast. Functionally, ruBisCO catalyzes two reactions: the carboxylation of D-ribulose 1,5-bisphosphate, the primary event in carbon dioxide fixation, as well as the oxidative fragmentation of the pentose substrate. Both reactions occur simultaneously and in competition at the same active site. Although the small subunit is not catalytic it is essential for maximal activity. The sequence is that of Ribulose bisphosphate carboxylase small subunit, chloroplastic from Raphanus sativus (Radish).